Here is a 533-residue protein sequence, read N- to C-terminus: UDP-glucuronosyltransferase 1-2 (533 aa).

Residues 1 to 27 (MDTGLCVPLRGISGLLLLLCALPWAEG) form the signal peptide. 3 N-linked (GlcNAc...) asparagine glycosylation sites follow: Asn141, Asn295, and Asn433. Residues 491 to 511 (VIGFLLAIVLTVVFIVFKCCA) traverse the membrane as a helical segment.

The protein belongs to the UDP-glycosyltransferase family. Expressed in kidney.

Its subcellular location is the microsome. The protein localises to the endoplasmic reticulum membrane. It carries out the reaction glucuronate acceptor + UDP-alpha-D-glucuronate = acceptor beta-D-glucuronoside + UDP + H(+). Its function is as follows. UDPGT is of major importance in the conjugation and subsequent elimination of potentially toxic xenobiotics and endogenous compounds. The chain is UDP-glucuronosyltransferase 1-2 (Ugt1a2) from Mus musculus (Mouse).